A 222-amino-acid polypeptide reads, in one-letter code: UPF0502 protein XCV4380 (222 aa).

This sequence belongs to the UPF0502 family.

In Xanthomonas euvesicatoria pv. vesicatoria (strain 85-10) (Xanthomonas campestris pv. vesicatoria), this protein is UPF0502 protein XCV4380.